The sequence spans 487 residues: Protein Optix (487 aa).

Positions 154-214 (WDGEQKTHCF…KNRRQRDRAA (61 aa)) form a DNA-binding region, homeobox. 2 disordered regions span residues 182–330 (NPTK…GAGP) and 443–463 (ASVGGGGGNQHHEPTTTGYHH). Positions 255-277 (GTHSPVPSSLQLQHSPGSTSNGA) are enriched in polar residues. Residues 278–293 (NDREESLSVDDDKPRD) are compositionally biased toward basic and acidic residues. Low complexity predominate over residues 294–312 (LSGSLPLPLSLPLPLASPT). The segment covering 321–330 (GYGGGAGAGP) has biased composition (gly residues).

Belongs to the SIX/Sine oculis homeobox family. Expressed during early development of the head. First expressed in a band around the anterior end of stage 5 blastoderm embryo, at 93% to 85% egg length. By gastrula stage, site of expression shifts to the dorsal-anterior region. At stage 12, expression is found in the clypeolabrum, the stomodaeum, and in ectoderm dorsal to the future supraesophageal ganglion.

The protein localises to the nucleus. May be involved in head or eye development; development of the clypeolabrum and several head sensory organs. The polypeptide is Protein Optix (Optix) (Drosophila melanogaster (Fruit fly)).